We begin with the raw amino-acid sequence, 91 residues long: UPF0250 protein PputGB1_4855 (91 aa).

It belongs to the UPF0250 family.

This chain is UPF0250 protein PputGB1_4855, found in Pseudomonas putida (strain GB-1).